A 269-amino-acid polypeptide reads, in one-letter code: MREIELWTAVLAGVVQGITEWLPISSEGQATMTMMKVLGIPPSTAMDLALWLHAGTLLAVLLRFGVPYWLTVRDLLMGGPWRRLGLFAIVATVCTAVVGLPVYKVLKGIFSAATGDAVQMAIGGALIVTGLLLRISPEGLRDRREVNVVDAVIVGLGQGFSVIPGISRSGTTMALLLWRRFDGGEAVWLSFYLAGPAMLGATALELKEGLSAATKMGTSWMVTAIGVSFVVSLICMEVLLRVARRLDFSKVCLLLGGIALLVPLAAKML.

8 consecutive transmembrane segments (helical) span residues 4-24 (IELW…WLPI), 50-70 (LWLH…PYWL), 86-106 (LFAI…YKVL), 113-133 (ATGD…GLLL), 146-166 (VNVV…IPGI), 186-206 (AVWL…ALEL), 220-240 (WMVT…EVLL), and 246-266 (LDFS…PLAA).

Belongs to the UppP family.

The protein localises to the cell membrane. The catalysed reaction is di-trans,octa-cis-undecaprenyl diphosphate + H2O = di-trans,octa-cis-undecaprenyl phosphate + phosphate + H(+). Catalyzes the dephosphorylation of undecaprenyl diphosphate (UPP). This Methanopyrus kandleri (strain AV19 / DSM 6324 / JCM 9639 / NBRC 100938) protein is Undecaprenyl-diphosphatase.